The following is a 277-amino-acid chain: 3-methyl-2-oxobutanoate hydroxymethyltransferase (277 aa).

Mg(2+) is bound by residues aspartate 53 and aspartate 96. 3-methyl-2-oxobutanoate-binding positions include 53–54, aspartate 96, and lysine 126; that span reads DS. Glutamate 128 contributes to the Mg(2+) binding site. Catalysis depends on glutamate 195, which acts as the Proton acceptor.

Belongs to the PanB family. As to quaternary structure, homodecamer; pentamer of dimers. Mg(2+) is required as a cofactor.

It localises to the cytoplasm. The catalysed reaction is 3-methyl-2-oxobutanoate + (6R)-5,10-methylene-5,6,7,8-tetrahydrofolate + H2O = 2-dehydropantoate + (6S)-5,6,7,8-tetrahydrofolate. Its pathway is cofactor biosynthesis; (R)-pantothenate biosynthesis; (R)-pantoate from 3-methyl-2-oxobutanoate: step 1/2. Catalyzes the reversible reaction in which hydroxymethyl group from 5,10-methylenetetrahydrofolate is transferred onto alpha-ketoisovalerate to form ketopantoate. The protein is 3-methyl-2-oxobutanoate hydroxymethyltransferase of Prosthecochloris aestuarii (strain DSM 271 / SK 413).